Reading from the N-terminus, the 272-residue chain is TLC domain-containing protein 4 C (272 aa).

The next 7 helical transmembrane spans lie at 16–36, 71–91, 103–123, 128–148, 155–175, 196–216, and 233–253; these read FSNS…FIIY, VSMI…VESF, SLLM…IICY, LVGT…IYVA, CFVP…PLNM, FVIT…IYLV, and VFIT…FLLI. The TLC domain maps to 61–261; sequence KKKLEWDQRV…LIKKLYQTYL (201 aa).

Belongs to the TLCD4 family.

The protein localises to the membrane. The protein is TLC domain-containing protein 4 C (tlcd4c) of Dictyostelium discoideum (Social amoeba).